Consider the following 117-residue polypeptide: uncharacterized protein (117 aa).

The span at 1–19 (MTSNPSSSADQPLSGTTVP) shows a compositional bias: polar residues. A disordered region spans residues 1–28 (MTSNPSSSADQPLSGTTVPGSVPGKAPE). Transmembrane regions (helical) follow at residues 38-58 (AAVW…LIFI) and 76-96 (LPLG…TVFA).

It localises to the cell membrane. This is an uncharacterized protein from Mycobacterium tuberculosis (strain ATCC 25618 / H37Rv).